Reading from the N-terminus, the 385-residue chain is Succinate--CoA ligase [ADP-forming] subunit beta (385 aa).

The region spanning lysine 9–glutamate 244 is the ATP-grasp domain. ATP is bound by residues lysine 46, glycine 53–glycine 55, glutamate 99, cysteine 102, and glutamate 107. Asparagine 199 and aspartate 213 together coordinate Mg(2+). Residues asparagine 264 and glycine 321–methionine 323 each bind substrate.

Belongs to the succinate/malate CoA ligase beta subunit family. Heterotetramer of two alpha and two beta subunits. The cofactor is Mg(2+).

It carries out the reaction succinate + ATP + CoA = succinyl-CoA + ADP + phosphate. The catalysed reaction is GTP + succinate + CoA = succinyl-CoA + GDP + phosphate. It participates in carbohydrate metabolism; tricarboxylic acid cycle; succinate from succinyl-CoA (ligase route): step 1/1. In terms of biological role, succinyl-CoA synthetase functions in the citric acid cycle (TCA), coupling the hydrolysis of succinyl-CoA to the synthesis of either ATP or GTP and thus represents the only step of substrate-level phosphorylation in the TCA. The beta subunit provides nucleotide specificity of the enzyme and binds the substrate succinate, while the binding sites for coenzyme A and phosphate are found in the alpha subunit. The chain is Succinate--CoA ligase [ADP-forming] subunit beta from Bacillus velezensis (strain DSM 23117 / BGSC 10A6 / LMG 26770 / FZB42) (Bacillus amyloliquefaciens subsp. plantarum).